A 311-amino-acid chain; its full sequence is Thioredoxin reductase (311 aa).

Residue 33-43 participates in FAD binding; it reads EGFFSGISGGQ. An intrachain disulfide couples Cys138 to Cys141. An FAD-binding site is contributed by 283–292; that stretch reads DVQDKYYRQA.

This sequence belongs to the class-II pyridine nucleotide-disulfide oxidoreductase family. Homodimer. FAD serves as cofactor.

The protein localises to the cytoplasm. It carries out the reaction [thioredoxin]-dithiol + NADP(+) = [thioredoxin]-disulfide + NADPH + H(+). This is Thioredoxin reductase (trxB) from Chlamydia pneumoniae (Chlamydophila pneumoniae).